The primary structure comprises 439 residues: Uracil-regulated protein 1 (439 aa).

The interval 1–24 is disordered; the sequence is MLATEQSRPAECNGAHAHEKTEEV. 268-272 contacts GTP; that stretch reads RVHDE. The Zn(2+) site is built by Cys273, Cys284, and Cys286. 315-317 serves as a coordination point for GTP; sequence EGR. Asp353 (proton acceptor) is an active-site residue. Arg355 serves as the catalytic Nucleophile. 2 residues coordinate GTP: Ser377 and Lys382.

It belongs to the GTP cyclohydrolase II family.

The protein resides in the cytoplasm. The protein localises to the nucleus. This chain is Uracil-regulated protein 1 (urg1), found in Schizosaccharomyces pombe (strain 972 / ATCC 24843) (Fission yeast).